The sequence spans 130 residues: Small ribosomal subunit protein uS9 (130 aa).

This sequence belongs to the universal ribosomal protein uS9 family.

This Salmonella paratyphi A (strain AKU_12601) protein is Small ribosomal subunit protein uS9.